The sequence spans 394 residues: Xylose isomerase (394 aa).

Active-site residues include H54 and D57. Residues E181, E217, H220, D245, D255, D257, and D292 each coordinate Mg(2+).

This sequence belongs to the xylose isomerase family. In terms of assembly, homotetramer. It depends on Mg(2+) as a cofactor.

Its subcellular location is the cytoplasm. It carries out the reaction alpha-D-xylose = alpha-D-xylulofuranose. In Actinoplanes missouriensis (strain ATCC 14538 / DSM 43046 / CBS 188.64 / JCM 3121 / NBRC 102363 / NCIMB 12654 / NRRL B-3342 / UNCC 431), this protein is Xylose isomerase (xylA).